The primary structure comprises 385 residues: NADH-quinone oxidoreductase subunit D 2 (385 aa).

It belongs to the complex I 49 kDa subunit family. NDH-1 is composed of 14 different subunits. Subunits NuoB, C, D, E, F, and G constitute the peripheral sector of the complex.

It localises to the cell membrane. The catalysed reaction is a quinone + NADH + 5 H(+)(in) = a quinol + NAD(+) + 4 H(+)(out). Its function is as follows. NDH-1 shuttles electrons from NADH, via FMN and iron-sulfur (Fe-S) centers, to quinones in the respiratory chain. The immediate electron acceptor for the enzyme in this species is believed to be a menaquinone. Couples the redox reaction to proton translocation (for every two electrons transferred, four hydrogen ions are translocated across the cytoplasmic membrane), and thus conserves the redox energy in a proton gradient. This is NADH-quinone oxidoreductase subunit D 2 from Salinispora arenicola (strain CNS-205).